We begin with the raw amino-acid sequence, 62 residues long: Photosystem II reaction center protein Z (62 aa).

A run of 2 helical transmembrane segments spans residues 8–28 (ALAA…VAYA) and 41–61 (FVGS…NFFV).

The protein belongs to the PsbZ family. As to quaternary structure, PSII is composed of 1 copy each of membrane proteins PsbA, PsbB, PsbC, PsbD, PsbE, PsbF, PsbH, PsbI, PsbJ, PsbK, PsbL, PsbM, PsbT, PsbX, PsbY, PsbZ, Psb30/Ycf12, peripheral proteins PsbO, CyanoQ (PsbQ), PsbU, PsbV and a large number of cofactors. It forms dimeric complexes.

Its subcellular location is the cellular thylakoid membrane. May control the interaction of photosystem II (PSII) cores with the light-harvesting antenna, regulates electron flow through the 2 photosystem reaction centers. PSII is a light-driven water plastoquinone oxidoreductase, using light energy to abstract electrons from H(2)O, generating a proton gradient subsequently used for ATP formation. In Picosynechococcus sp. (strain ATCC 27264 / PCC 7002 / PR-6) (Agmenellum quadruplicatum), this protein is Photosystem II reaction center protein Z.